We begin with the raw amino-acid sequence, 1328 residues long: Mitogen-activated protein kinase kinase kinase 19 (1328 aa).

Positions 1–19 (MSSMPKPERHAESLLDICH) are enriched in basic and acidic residues. Disordered stretches follow at residues 1–28 (MSSM…PTDL), 44–74 (RSEE…QDWQ), 344–380 (VREE…AKNY), and 524–561 (QEND…GPIK). A compositionally biased stretch (basic and acidic residues) spans 344–361 (VREEDIDCHGSKTRKPEE). Residues 364-377 (SQYLSSRKNESSVA) are compositionally biased toward polar residues. A compositionally biased stretch (basic and acidic residues) spans 524–542 (QENDKHKMNSHRSKLDSKT). The Protein kinase domain maps to 1061–1324 (WTKGEILGKG…ALQLLKHSFL (264 aa)). ATP-binding positions include 1067–1075 (LGKGAYGTV) and Lys-1089. The Proton acceptor role is filled by Asp-1186.

Belongs to the protein kinase superfamily. STE Ser/Thr protein kinase family. STE20 subfamily.

It carries out the reaction L-seryl-[protein] + ATP = O-phospho-L-seryl-[protein] + ADP + H(+). The enzyme catalyses L-threonyl-[protein] + ATP = O-phospho-L-threonyl-[protein] + ADP + H(+). The polypeptide is Mitogen-activated protein kinase kinase kinase 19 (MAP3K19) (Homo sapiens (Human)).